The chain runs to 340 residues: MTRAGEVLPGFAGGTINLASAGLGARALFATDEFFGPLERMLKDEPAAFHPGLYDDHGKWMDGWETRRRRGAGHDYAVIALAAKGRIAGFDVDTSHFTGNYPSACSIEACHSAEDPDEATEWVQLLPVTGLGPNAHHFFAAHSDAVYSHIRLRIHPDGGIARLRVYGTPALDLKAMANETIDLASCLLGGRIVAFSNGHYGHERLIAPGRGANMGDGWETRRRREPGYDWIIVKLAARGHVERILVDTAHFKGNYPDACSLQAADLGGMTAECDMLVASSAMFWNELLPHRKLSADSVHEYGSDMLRHADPVTHVRLNIYPDGGVSRLRIYGRVADPRSR.

It belongs to the allantoicase family.

It carries out the reaction allantoate + H2O = (S)-ureidoglycolate + urea. It functions in the pathway nitrogen metabolism; (S)-allantoin degradation; (S)-ureidoglycolate from allantoate (aminidohydrolase route): step 1/1. This Rhizobium meliloti (strain 1021) (Ensifer meliloti) protein is Probable allantoicase.